The chain runs to 166 residues: P2Y purinoceptor 2 (166 aa).

Topologically, residues 1–24 are cytoplasmic; sequence VHRCLGVLRPLHSLRWGRARYARR. The helical transmembrane segment at 25 to 45 threads the bilayer; it reads VAAVVWVLVLACQAPVLYFVT. Topologically, residues 46–72 are extracellular; the sequence is TSVRGTRITCHDTSARELFSHFVAYSS. A helical membrane pass occupies residues 73–93; that stretch reads VMLSLLFAVPFSVILVCYVLM. At 94-115 the chain is on the cytoplasmic side; sequence ARRLLKPAYGTTGGLPRAKRKS. The helical transmembrane segment at 116–136 threads the bilayer; that stretch reads VRTIALVLAVFTLCFLPFHVT. Residues 137–159 lie on the Extracellular side of the membrane; it reads RTLYYSFRSLDLSCHTLNAINMA. The chain crosses the membrane as a helical span at residues 160–166; sequence YKITRPL.

Belongs to the G-protein coupled receptor 1 family.

The protein localises to the cell membrane. Receptor for ATP and UTP coupled to G-proteins that activate a phosphatidylinositol-calcium second messenger system. This is P2Y purinoceptor 2 (P2RY2) from Cricetulus griseus (Chinese hamster).